Here is a 374-residue protein sequence, read N- to C-terminus: Alcohol dehydrogenase 1 (374 aa).

S1 carries the post-translational modification N-acetylserine. Zn(2+) contacts are provided by C46, H67, C97, C100, C103, C111, and C174. Residues 199-204 (GLGGVG), D223, K228, 292-294 (VGV), and R369 each bind NAD(+).

It belongs to the zinc-containing alcohol dehydrogenase family. Class-I subfamily. Requires Zn(2+) as cofactor.

It is found in the cytoplasm. It carries out the reaction a primary alcohol + NAD(+) = an aldehyde + NADH + H(+). The enzyme catalyses a secondary alcohol + NAD(+) = a ketone + NADH + H(+). The protein is Alcohol dehydrogenase 1 of Alligator mississippiensis (American alligator).